The sequence spans 374 residues: Type IV secretion system protein PtlG homolog (374 aa).

Residues 38–56 (WMFALVAVALSCLLATGIW) traverse the membrane as a helical segment. The segment at 86 to 117 (HPREPEPAPLPDMPAAPDPILPQPRPAPPVPP) is disordered. Pro residues predominate over residues 92-117 (PAPLPDMPAAPDPILPQPRPAPPVPP).

The protein belongs to the TrbI/VirB10 family.

The protein resides in the cell membrane. The polypeptide is Type IV secretion system protein PtlG homolog (ptlG) (Bordetella bronchiseptica (strain ATCC BAA-588 / NCTC 13252 / RB50) (Alcaligenes bronchisepticus)).